The sequence spans 261 residues: Malonyl-[acyl-carrier protein] O-methyltransferase (261 aa).

This sequence belongs to the methyltransferase superfamily.

The enzyme catalyses malonyl-[ACP] + S-adenosyl-L-methionine = malonyl-[ACP] methyl ester + S-adenosyl-L-homocysteine. It functions in the pathway cofactor biosynthesis; biotin biosynthesis. In terms of biological role, converts the free carboxyl group of a malonyl-thioester to its methyl ester by transfer of a methyl group from S-adenosyl-L-methionine (SAM). It allows to synthesize pimeloyl-ACP via the fatty acid synthetic pathway. In Bacteroides thetaiotaomicron (strain ATCC 29148 / DSM 2079 / JCM 5827 / CCUG 10774 / NCTC 10582 / VPI-5482 / E50), this protein is Malonyl-[acyl-carrier protein] O-methyltransferase.